Consider the following 525-residue polypeptide: Mitogen-activated protein kinase kinase 5 (525 aa).

One can recognise a Protein kinase domain in the interval 59-317; the sequence is ETEGGFLGKG…CTELLRHPFI (259 aa). Residues 65-73 and lysine 88 contribute to the ATP site; that span reads LGKGSSGSV. The active-site Proton acceptor is aspartate 178. Residues 358–367 are compositionally biased toward low complexity; it reads SALPLASEGG. Disordered regions lie at residues 358-392 and 438-468; these read SALP…ERHD and SASV…AQHR.

This sequence belongs to the protein kinase superfamily. STE Ser/Thr protein kinase family. MAP kinase kinase subfamily. Mg(2+) is required as a cofactor.

It carries out the reaction L-tyrosyl-[protein] + ATP = O-phospho-L-tyrosyl-[protein] + ADP + H(+). The enzyme catalyses L-seryl-[protein] + ATP = O-phospho-L-seryl-[protein] + ADP + H(+). It catalyses the reaction L-threonyl-[protein] + ATP = O-phospho-L-threonyl-[protein] + ADP + H(+). Functionally, protein kinase which phosphorylates and activates MPK4 in vitro. This chain is Mitogen-activated protein kinase kinase 5, found in Leishmania mexicana.